We begin with the raw amino-acid sequence, 161 residues long: NADH-quinone oxidoreductase subunit I (161 aa).

4Fe-4S ferredoxin-type domains follow at residues 52 to 82 and 92 to 121; these read LRRY…IESE and KRYD…ETRV. [4Fe-4S] cluster-binding residues include C62, C65, C68, C72, C101, C104, C107, and C111.

This sequence belongs to the complex I 23 kDa subunit family. In terms of assembly, NDH-1 is composed of 14 different subunits. Subunits NuoA, H, J, K, L, M, N constitute the membrane sector of the complex. It depends on [4Fe-4S] cluster as a cofactor.

Its subcellular location is the cell inner membrane. The catalysed reaction is a quinone + NADH + 5 H(+)(in) = a quinol + NAD(+) + 4 H(+)(out). Functionally, NDH-1 shuttles electrons from NADH, via FMN and iron-sulfur (Fe-S) centers, to quinones in the respiratory chain. The immediate electron acceptor for the enzyme in this species is believed to be ubiquinone. Couples the redox reaction to proton translocation (for every two electrons transferred, four hydrogen ions are translocated across the cytoplasmic membrane), and thus conserves the redox energy in a proton gradient. The sequence is that of NADH-quinone oxidoreductase subunit I from Aromatoleum aromaticum (strain DSM 19018 / LMG 30748 / EbN1) (Azoarcus sp. (strain EbN1)).